The chain runs to 242 residues: Large ribosomal subunit protein uL1 (242 aa).

Belongs to the universal ribosomal protein uL1 family. In terms of assembly, part of the 50S ribosomal subunit.

Its function is as follows. Binds directly to 23S rRNA. The L1 stalk is quite mobile in the ribosome, and is involved in E site tRNA release. In terms of biological role, protein L1 is also a translational repressor protein, it controls the translation of the L11 operon by binding to its mRNA. This chain is Large ribosomal subunit protein uL1, found in Streptomyces sp. (strain FRI-5).